A 69-amino-acid polypeptide reads, in one-letter code: uncharacterized protein (69 aa).

Helical transmembrane passes span 7-29 and 44-66; these read LLSG…LGSI and ALQV…LGLL.

The protein resides in the cell membrane. This is an uncharacterized protein from Archaeoglobus fulgidus (strain ATCC 49558 / DSM 4304 / JCM 9628 / NBRC 100126 / VC-16).